The sequence spans 2293 residues: Protein Ycf2 (2293 aa).

ATP is bound at residue 1647–1654; the sequence is GSIGTGRS.

The protein belongs to the Ycf2 family.

It localises to the plastid. The protein localises to the chloroplast stroma. In terms of biological role, probable ATPase of unknown function. Its presence in a non-photosynthetic plant (Epifagus virginiana) and experiments in tobacco indicate that it has an essential function which is probably not related to photosynthesis. The chain is Protein Ycf2 from Lobularia maritima (Sweet alyssum).